Reading from the N-terminus, the 270-residue chain is Urease accessory protein UreD (270 aa).

This sequence belongs to the UreD family. As to quaternary structure, ureD, UreF and UreG form a complex that acts as a GTP-hydrolysis-dependent molecular chaperone, activating the urease apoprotein by helping to assemble the nickel containing metallocenter of UreC. The UreE protein probably delivers the nickel.

The protein localises to the cytoplasm. In terms of biological role, required for maturation of urease via the functional incorporation of the urease nickel metallocenter. The protein is Urease accessory protein UreD of Actinobacillus pleuropneumoniae serotype 5b (strain L20).